A 276-amino-acid chain; its full sequence is MKIMQSVTQLREALAGQTSVGFIPTMGFLHEGHASLLEQARQENDIVVLSIFVNPTQFGPNEDLDRYPRDEQRDQQLAQAAGVDYLFYPTNDVMYPLDMARVTVRSGDDVLCGTSRPGHFDGVLTVVSKLFNIVQPTRAYFGLKDAQQLALIEGYVTDYFVPVEIKRCPIIREADGLAKSSRNVYLSETERKQAPGIQQALQQAKQALDAGTPLETVLEQTRASLHFEGTTIDYVEAVAYPTLGPVDATTDTILLAVAVQFESARLIDNLLYTRGA.

Residue 26-33 (MGFLHEGH) participates in ATP binding. H33 functions as the Proton donor in the catalytic mechanism. Position 57 (Q57) interacts with (R)-pantoate. Beta-alanine is bound at residue Q57. ATP is bound at residue 142–145 (GLKD). Q148 serves as a coordination point for (R)-pantoate. Residues I171 and 179–182 (KSSR) contribute to the ATP site.

The protein belongs to the pantothenate synthetase family. As to quaternary structure, homodimer.

It localises to the cytoplasm. The catalysed reaction is (R)-pantoate + beta-alanine + ATP = (R)-pantothenate + AMP + diphosphate + H(+). The protein operates within cofactor biosynthesis; (R)-pantothenate biosynthesis; (R)-pantothenate from (R)-pantoate and beta-alanine: step 1/1. Functionally, catalyzes the condensation of pantoate with beta-alanine in an ATP-dependent reaction via a pantoyl-adenylate intermediate. The polypeptide is Pantothenate synthetase (Exiguobacterium sibiricum (strain DSM 17290 / CCUG 55495 / CIP 109462 / JCM 13490 / 255-15)).